The following is a 199-amino-acid chain: Putative pseudouridine methyltransferase (199 aa).

The S-adenosyl-L-methionine site is built by M132 and C186.

This sequence belongs to the methyltransferase superfamily. TrmY family.

The protein localises to the cytoplasm. The chain is Putative pseudouridine methyltransferase from Vibrio atlanticus (strain LGP32) (Vibrio splendidus (strain Mel32)).